A 507-amino-acid polypeptide reads, in one-letter code: Wax ester synthase/diacylglycerol acyltransferase 5 (507 aa).

The Cytoplasmic portion of the chain corresponds to M1 to R211. The active-site Proton acceptor is H161. The chain crosses the membrane as a helical span at residues F212 to D232. Topologically, residues A233–Q507 are lumenal. N-linked (GlcNAc...) asparagine glycosylation is found at N314 and N421.

In the N-terminal section; belongs to the long-chain O-acyltransferase family. In terms of tissue distribution, mostly expressed in flowers and siliques.

Its subcellular location is the cell membrane. It localises to the endoplasmic reticulum membrane. The enzyme catalyses a long chain fatty alcohol + a fatty acyl-CoA = a wax ester + CoA. The catalysed reaction is an acyl-CoA + a 1,2-diacyl-sn-glycerol = a triacyl-sn-glycerol + CoA. The protein operates within glycerolipid metabolism; triacylglycerol biosynthesis. It participates in lipid metabolism. In terms of biological role, bifunctional wax ester synthase/diacylglycerol acyltransferase. Involved in cuticular wax biosynthesis. The polypeptide is Wax ester synthase/diacylglycerol acyltransferase 5 (Arabidopsis thaliana (Mouse-ear cress)).